The primary structure comprises 203 residues: High frequency lysogenization protein HflD homolog (203 aa).

This sequence belongs to the HflD family.

The protein localises to the cytoplasm. It localises to the cell inner membrane. The sequence is that of High frequency lysogenization protein HflD homolog from Aeromonas salmonicida (strain A449).